The primary structure comprises 571 residues: Proline--tRNA ligase (571 aa).

Belongs to the class-II aminoacyl-tRNA synthetase family. ProS type 1 subfamily. In terms of assembly, homodimer.

It localises to the cytoplasm. The enzyme catalyses tRNA(Pro) + L-proline + ATP = L-prolyl-tRNA(Pro) + AMP + diphosphate. Functionally, catalyzes the attachment of proline to tRNA(Pro) in a two-step reaction: proline is first activated by ATP to form Pro-AMP and then transferred to the acceptor end of tRNA(Pro). As ProRS can inadvertently accommodate and process non-cognate amino acids such as alanine and cysteine, to avoid such errors it has two additional distinct editing activities against alanine. One activity is designated as 'pretransfer' editing and involves the tRNA(Pro)-independent hydrolysis of activated Ala-AMP. The other activity is designated 'posttransfer' editing and involves deacylation of mischarged Ala-tRNA(Pro). The misacylated Cys-tRNA(Pro) is not edited by ProRS. This chain is Proline--tRNA ligase, found in Acinetobacter baumannii (strain ATCC 17978 / DSM 105126 / CIP 53.77 / LMG 1025 / NCDC KC755 / 5377).